The chain runs to 556 residues: Formate--tetrahydrofolate ligase (556 aa).

65-72 (TPAGEGKS) serves as a coordination point for ATP.

This sequence belongs to the formate--tetrahydrofolate ligase family.

It carries out the reaction (6S)-5,6,7,8-tetrahydrofolate + formate + ATP = (6R)-10-formyltetrahydrofolate + ADP + phosphate. It participates in one-carbon metabolism; tetrahydrofolate interconversion. This Streptococcus pneumoniae serotype 19F (strain G54) protein is Formate--tetrahydrofolate ligase.